A 423-amino-acid polypeptide reads, in one-letter code: T-box protein 2 (423 aa).

The segment at residues 70–243 is a DNA-binding region (T-box); sequence LWQQFSQCGT…NNPFAKGFRD (174 aa). Disordered regions lie at residues 238–324 and 384–423; these read AKGF…PLRS and VEATSEDSEEAEKPEVKKEQKSVTPPKKGGFDVLDLLSKP. Residues 261-283 are compositionally biased toward polar residues; it reads DATQSPPGKTASLPTHSPHPSES. Positions 302-317 are enriched in low complexity; the sequence is TPTTSSLSTSTTPTLS. Over residues 394–404 the composition is skewed to basic and acidic residues; it reads AEKPEVKKEQK.

In terms of processing, sumoylated. Expressed in body wall muscles and a subset of pharyngeal neurons. Expressed in head neurons and occassionally tail neurons. Not expressed in the pharynx.

It localises to the nucleus. In terms of biological role, involved in the transcriptional regulation of genes required for the development of pharyngeal muscles derived from the ABa lineage. Acts as a transcriptional repressor and binds to T-box binding sites in its own promoter to negatively autoregulate its own expression in neurons, seam cells and the gut in order to restrict its expression to certain tissues. May function together with the nfya-1-NF-Y complex to repress its own expression. Plays a role in neural fate specification in the hermaphrodite-specific neuron (HSN)/PHB neuron lineage, acting in concert with homeobox protein egl-5 and the asymmetric cell division protein ham-1. The sequence is that of T-box protein 2 from Caenorhabditis elegans.